The primary structure comprises 297 residues: MAKVSELYDVTWEEMRDKMRKWREENSRNSEQIVEVGEELINEYGSKLGDDIWIIYEQVMIAALDYGRDDLALFCLQELRRQFPGSHRVKRLTGMRFEAMERYDDAIQLYDRILQEDPTNTAARKRKIAIRKAQGKNVEAIRELNEYLEQFVGDQEAWHELAELYINEHDYAKAAFCLEELMMTNPHNHLYCQQYAEVKYTQGGLENLELSRKYFAQALKLNNRNMRALFGLYMSASHIASNPKASAKTKKDNMKYASWAASQINRAYQFAGRSKKETKYSLKAVEDMLETLQITQS.

An N-acetylalanine modification is found at A2. 3 TPR repeats span residues 87 to 120 (HRVK…DPTN), 155 to 188 (QEAW…NPHN), and 192 to 225 (CQQY…NNRN). K255 is modified (N6-acetyllysine).

It belongs to the EMC2 family. In terms of assembly, component of the ER membrane protein complex (EMC). Interacts with WNK1 (via amphipathic alpha-helix region); promoting the ER membrane protein complex assembly by preventing EMC2 ubiquitination. Ubiquitinated when soluble in the cytoplasm, leading to its degradation by the proteasome. Interaction with EMC2 prevents its ubiquitination and degradation.

Its subcellular location is the endoplasmic reticulum membrane. Its function is as follows. Part of the endoplasmic reticulum membrane protein complex (EMC) that enables the energy-independent insertion into endoplasmic reticulum membranes of newly synthesized membrane proteins. Preferentially accommodates proteins with transmembrane domains that are weakly hydrophobic or contain destabilizing features such as charged and aromatic residues. Involved in the cotranslational insertion of multi-pass membrane proteins in which stop-transfer membrane-anchor sequences become ER membrane spanning helices. It is also required for the post-translational insertion of tail-anchored/TA proteins in endoplasmic reticulum membranes. By mediating the proper cotranslational insertion of N-terminal transmembrane domains in an N-exo topology, with translocated N-terminus in the lumen of the ER, controls the topology of multi-pass membrane proteins like the G protein-coupled receptors. By regulating the insertion of various proteins in membranes, it is indirectly involved in many cellular processes. The protein is ER membrane protein complex subunit 2 of Pongo abelii (Sumatran orangutan).